Here is a 453-residue protein sequence, read N- to C-terminus: Probable phenylalanine--tRNA ligase, mitochondrial (453 aa).

Residues Met-1–Ala-27 constitute a mitochondrion transit peptide. Residues Thr-142–Gln-145, Arg-164, Thr-171–Tyr-173, Gln-178–Asp-180, Glu-285, and Phe-310 each bind substrate. An FDX-ACB domain is found at Ser-356–Arg-453.

The protein belongs to the class-II aminoacyl-tRNA synthetase family.

The protein localises to the mitochondrion matrix. The catalysed reaction is tRNA(Phe) + L-phenylalanine + ATP = L-phenylalanyl-tRNA(Phe) + AMP + diphosphate + H(+). In terms of biological role, is responsible for the charging of tRNA(Phe) with phenylalanine in mitochondrial translation. The polypeptide is Probable phenylalanine--tRNA ligase, mitochondrial (Drosophila melanogaster (Fruit fly)).